Consider the following 160-residue polypeptide: Cytochrome b6-f complex subunit 4 (160 aa).

A run of 3 helical transmembrane segments spans residues 36–56 (LLYM…GLSV), 95–115 (LLGV…PFIE), and 131–151 (ILFL…TFPI).

This sequence belongs to the cytochrome b family. PetD subfamily. In terms of assembly, the 4 large subunits of the cytochrome b6-f complex are cytochrome b6, subunit IV (17 kDa polypeptide, petD), cytochrome f and the Rieske protein, while the 4 small subunits are petG, petL, petM and petN. The complex functions as a dimer. In terms of processing, the N-terminus is blocked.

The protein localises to the plastid. It localises to the chloroplast thylakoid membrane. Functionally, component of the cytochrome b6-f complex, which mediates electron transfer between photosystem II (PSII) and photosystem I (PSI), cyclic electron flow around PSI, and state transitions. This is Cytochrome b6-f complex subunit 4 from Chlamydomonas reinhardtii (Chlamydomonas smithii).